A 563-amino-acid polypeptide reads, in one-letter code: Beta-catenin-like protein 1 (563 aa).

N-acetylmethionine is present on methionine 1. Residues 1–81 (MDVGELLSYQ…EEEEPLDESS (81 aa)) form a disordered region. The short motif at 16 to 33 (KRPRDDEEEELKTRRKQT) is the Nuclear localization signal element. Residues 34-45 (GPRERGRYREEE) show a composition bias toward basic and acidic residues. Residues 66–78 (DGEEEEEEEEPLD) are compositionally biased toward acidic residues. HEAT repeat units lie at residues 79-129 (ESSV…VVAT) and 134-176 (YHLL…TLHE). Lysine 91 is modified (N6-acetyllysine). The Nuclear export signal (NES) signature appears at 130–140 (MPDLYHLLVEL). 5 ARM repeats span residues 178-228 (EEGA…MAEF), 229-273 (RPEM…LQDN), 274-323 (DENR…CLML), 325-363 (SNRE…AMIG), and 364-417 (PEGT…LLRN). Phosphoserine is present on serine 389. A coiled-coil region spans residues 476 to 540 (DMEDEFYLRR…HIIKEYAENI (65 aa)). Serine 545 bears the Phosphoserine mark.

Component of the PRP19-CDC5L splicing complex composed of a core complex comprising a homotetramer of PRPF19, CDC5L, PLRG1 and BCAS2, and at least three less stably associated proteins CTNNBL1, CWC15 and HSPA8. Interacts directly with CWC15 and CDC5L in the complex. Interacts with AICDA; the interaction is important for the antibody diversification activity of AICDA. Interacts with PRPF31 (via its NLS). Interacts (via its N-terminal NLS) with KPNA1 and KPNA2.

The protein localises to the nucleus. Component of the PRP19-CDC5L complex that forms an integral part of the spliceosome and is required for activating pre-mRNA splicing. Participates in AID/AICDA-mediated somatic hypermutation (SHM) and class-switch recombination (CSR), 2 processes resulting in the production of high-affinity, mutated isotype-switched antibodies. The sequence is that of Beta-catenin-like protein 1 (Ctnnbl1) from Mus musculus (Mouse).